We begin with the raw amino-acid sequence, 412 residues long: MKTTTYSLLALAAASKLASAHTTVQAVWINGEDQGLGNSADGYIRSPPSNSPVTDVTSTDMTCNVNGDQAASKTLSVKAGDVVTFEWHHSDRSDSDDIIASSHKGPVQVYMAPTAKGSNGNNWVKIAEDGYHKSSDEWATDILIANKGKHNITVPDVPAGNYLFRPEIIALHEGNREGGAQFYMECVQFKVTSDGSSELPSGVSIPGVYTATDPGILFDIYNSFDSYPIPGPDVWDGSSSGSSSGSSSAAAAATTSAAVAATTPATQAAVEVSSSAAAVVESTSSAAAATTEAAAPVVSSAAPVQQATSAVTSQAQAPTTFATSSKSSKTACKNKTKSKSKVAASSTEAVVAPAPTSSVVPAVSASASASAGGVAKMYERCGGINHTGPTTCESGSVCKKWNPYYYQCVASQ.

The signal sequence occupies residues 1–20; that stretch reads MKTTTYSLLALAAASKLASA. Residues His-21 and His-103 each coordinate Cu(2+). Cys-63 and Cys-186 are disulfide-bonded. N-linked (GlcNAc...) asparagine glycosylation occurs at Asn-151. His-172 contacts O2. Cu(2+) is bound at residue Tyr-183. Residues Asn-334 and Asn-385 are each glycosylated (N-linked (GlcNAc...) asparagine). Residues 373–409 form the CBM1 domain; it reads GVAKMYERCGGINHTGPTTCESGSVCKKWNPYYYQCV.

It belongs to the polysaccharide monooxygenase AA9 family. Requires Cu(2+) as cofactor.

It localises to the secreted. It catalyses the reaction [(1-&gt;4)-beta-D-glucosyl]n+m + reduced acceptor + O2 = 4-dehydro-beta-D-glucosyl-[(1-&gt;4)-beta-D-glucosyl]n-1 + [(1-&gt;4)-beta-D-glucosyl]m + acceptor + H2O.. Its function is as follows. Lytic polysaccharide monooxygenase (LPMO) that depolymerizes crystalline and amorphous polysaccharides via the oxidation of scissile alpha- or beta-(1-4)-glycosidic bonds, yielding C4 oxidation products. Catalysis by LPMOs requires the reduction of the active-site copper from Cu(II) to Cu(I) by a reducing agent and H(2)O(2) or O(2) as a cosubstrate. The protein is AA9 family lytic polysaccharide monooxygenase A (eglD) of Aspergillus niger (strain ATCC MYA-4892 / CBS 513.88 / FGSC A1513).